Here is a 166-residue protein sequence, read N- to C-terminus: MALGLEDKKAIVAEVNEAAKGALSAVIADSRGVTVDKMTVLRKTAREAGVYMRVVRNTLLRRAVEGTEYECLNNAFTGPTLIAFSNEHPGAAARLFKEFAKANQKFEIKAGAFNGEFIAAAQIDRLATLPTYEEAIAKLMATMKEASAGKLVRTIAAVRDQKQAAA.

The protein belongs to the universal ribosomal protein uL10 family. Part of the ribosomal stalk of the 50S ribosomal subunit. The N-terminus interacts with L11 and the large rRNA to form the base of the stalk. The C-terminus forms an elongated spine to which L12 dimers bind in a sequential fashion forming a multimeric L10(L12)X complex.

In terms of biological role, forms part of the ribosomal stalk, playing a central role in the interaction of the ribosome with GTP-bound translation factors. In Aeromonas hydrophila subsp. hydrophila (strain ATCC 7966 / DSM 30187 / BCRC 13018 / CCUG 14551 / JCM 1027 / KCTC 2358 / NCIMB 9240 / NCTC 8049), this protein is Large ribosomal subunit protein uL10.